The chain runs to 686 residues: Putative xyloglucan glycosyltransferase 10 (686 aa).

2 helical membrane-spanning segments follow: residues 114–134 and 160–180; these read LYAF…VELA and AAYV…LFLV. Asp267 is an active-site residue. Asp326 and Asp328 together coordinate substrate. Asp420 is a catalytic residue. A run of 4 helical transmembrane segments spans residues 498 to 518, 523 to 543, 640 to 656, and 661 to 681; these read LILP…TMFI, LPDW…ILPA, ELAL…RSLL, and IHFY…LDLI.

It belongs to the glycosyltransferase 2 family. Plant cellulose synthase-like C subfamily.

It localises to the golgi apparatus membrane. In terms of biological role, probable beta-1,4-glucan synthase rather involved in the synthesis of the xyloglucan backbone than cellulose. Seems to work simultaneously with xyloglucan 6-xylosyltransferase. Xyloglucan is a noncellulosic polysaccharides of plant cell wall and consists of a glucan backbone substituted by xylose, galactose and fucose. In Oryza sativa subsp. indica (Rice), this protein is Putative xyloglucan glycosyltransferase 10 (CSLC10).